A 221-amino-acid chain; its full sequence is Agamous-like MADS-box protein AGL14 (221 aa).

The region spanning 3-57 is the MADS-box domain; it reads RGKTEMKRIENATSRQVTFSKRRNGLLKKAFELSVLCDAEVALIIFSPRGKLYEF. The region spanning 87 to 177 is the K-box domain; sequence SQQSKDETYG…MEKCEMQGRG (91 aa).

As to quaternary structure, interacts with AGL16. As to expression, preferentially expressed in roots. Expressed in lateral root cap, root epidermis, root endodermis, columella of the root meristematic region, the vascular cylinder in differentiated zones of the primary root and in emerged lateral root primordia. Expressed in pollen.

The protein resides in the nucleus. Functionally, transcriptional activator that regulates root development by controlling meristem size and patterning of the root apical meristem. Regulates auxin transport and gradients in the root meristematic cells via direct regulation of the auxin efflux carrier PIN1 and PIN4 gene expression. Binds specifically to the CArG-box DNA sequences in the promoter regions of PIN1 and PIN4 genes. Involved in the regulation of shoot apical meristem (SAM) cell identities and transitions. Promotes flowering transition and participates in flower meristem maintenance and determinacy. Positively regulates TFL1 and WUS expression. Binds directly to the TFL1 regulatory sequences. This chain is Agamous-like MADS-box protein AGL14, found in Arabidopsis thaliana (Mouse-ear cress).